Reading from the N-terminus, the 258-residue chain is Methylthioribulose-1-phosphate dehydratase (258 aa).

The tract at residues 1-21 is disordered; the sequence is MCSPTTENNNNNNDHLVQSSD. Position 105 (Cys105) interacts with substrate. Residues His123 and His125 each coordinate Zn(2+). Glu153 serves as the catalytic Proton donor/acceptor. His210 serves as a coordination point for Zn(2+).

Belongs to the aldolase class II family. MtnB subfamily. It depends on Zn(2+) as a cofactor.

Its subcellular location is the cytoplasm. It catalyses the reaction 5-(methylsulfanyl)-D-ribulose 1-phosphate = 5-methylsulfanyl-2,3-dioxopentyl phosphate + H2O. Its pathway is amino-acid biosynthesis; L-methionine biosynthesis via salvage pathway; L-methionine from S-methyl-5-thio-alpha-D-ribose 1-phosphate: step 2/6. In terms of biological role, catalyzes the dehydration of methylthioribulose-1-phosphate (MTRu-1-P) into 2,3-diketo-5-methylthiopentyl-1-phosphate (DK-MTP-1-P). The chain is Methylthioribulose-1-phosphate dehydratase from Neurospora crassa (strain ATCC 24698 / 74-OR23-1A / CBS 708.71 / DSM 1257 / FGSC 987).